The chain runs to 122 residues: Large ribosomal subunit protein uL14 (122 aa).

Belongs to the universal ribosomal protein uL14 family. In terms of assembly, part of the 50S ribosomal subunit. Forms a cluster with proteins L3 and L19. In the 70S ribosome, L14 and L19 interact and together make contacts with the 16S rRNA in bridges B5 and B8.

In terms of biological role, binds to 23S rRNA. Forms part of two intersubunit bridges in the 70S ribosome. The sequence is that of Large ribosomal subunit protein uL14 from Staphylococcus aureus (strain MW2).